Here is an 895-residue protein sequence, read N- to C-terminus: Protein translocase subunit SecA (895 aa).

ATP is bound by residues Gln-86, 104–108, and Asp-494; that span reads GEGKT. Composition is skewed to low complexity over residues 838-849 and 870-882; these read AAATPPGFGAPP and GDAA…TGNR. The disordered stretch occupies residues 838 to 895; that stretch reads AAATPPGFGAPPVRQQLQYSAPTAEGDVEVHAGDAAATDADTGNRAQRRANQRQQREV.

Belongs to the SecA family. As to quaternary structure, monomer and homodimer. Part of the essential Sec protein translocation apparatus which comprises SecA, SecYEG and auxiliary proteins SecDF. Other proteins may also be involved.

It is found in the cell membrane. Its subcellular location is the cytoplasm. The catalysed reaction is ATP + H2O + cellular proteinSide 1 = ADP + phosphate + cellular proteinSide 2.. Its function is as follows. Part of the Sec protein translocase complex. Interacts with the SecYEG preprotein conducting channel. Has a central role in coupling the hydrolysis of ATP to the transfer of proteins into and across the cell membrane, serving as an ATP-driven molecular motor driving the stepwise translocation of polypeptide chains across the membrane. The sequence is that of Protein translocase subunit SecA from Kineococcus radiotolerans (strain ATCC BAA-149 / DSM 14245 / SRS30216).